Consider the following 148-residue polypeptide: Ubiquitin-conjugating enzyme E2 13 (148 aa).

Residues 2–148 enclose the UBC core domain; that stretch reads ALPKRIIKEI…AREWTKKYAV (147 aa). Cysteine 86 acts as the Glycyl thioester intermediate in catalysis.

The protein belongs to the ubiquitin-conjugating enzyme family. Heterodimer with spm2.

It carries out the reaction S-ubiquitinyl-[E1 ubiquitin-activating enzyme]-L-cysteine + [E2 ubiquitin-conjugating enzyme]-L-cysteine = [E1 ubiquitin-activating enzyme]-L-cysteine + S-ubiquitinyl-[E2 ubiquitin-conjugating enzyme]-L-cysteine.. It functions in the pathway protein modification; protein ubiquitination. In terms of biological role, has a role in the DNA error-free postreplication repair (PRR) pathway. The ubc13/spm2 heterodimer catalyzes the synthesis of non-canonical poly-ubiquitin chains that are linked through 'Lys-63'. The polypeptide is Ubiquitin-conjugating enzyme E2 13 (ubc13) (Schizosaccharomyces pombe (strain 972 / ATCC 24843) (Fission yeast)).